The sequence spans 341 residues: MLVLGLETSCDETGVALYDSERGLLADALFSQIDLHRVFGGVVPELASRDHVKRMLPLIRQVLDEAGCVATEIDAIAYTAGPGLVGALLVGASCAQALAFAWDIPAIGVHHMEGHLLAPMLEENPPAFPFVALLVSGGHTQLVRVDGIGQYELLGESLDDAAGEAFDKTAKLIGLNYPGGPEIARLAEQGVAGRFVFPRPMTDRPGLEFSFSGLKTFALNTWQQCKNAGDDSEQTRCDLSLAFQQAVVETLTIKCKRALKQTGLKRLVIAGGVSANKALRASLEDMLGSIKGNVYYARPQFCTDNGAMIAYAGCQRLLAGQQQDLAISVQARWPMEQLPPL.

Residues His-111 and His-115 each coordinate Fe cation. Substrate-binding positions include 134-138, Asp-167, Gly-180, and Asn-276; that span reads LVSGG. A Fe cation-binding site is contributed by Asp-304.

This sequence belongs to the KAE1 / TsaD family. Requires Fe(2+) as cofactor.

The protein resides in the cytoplasm. The enzyme catalyses L-threonylcarbamoyladenylate + adenosine(37) in tRNA = N(6)-L-threonylcarbamoyladenosine(37) in tRNA + AMP + H(+). In terms of biological role, required for the formation of a threonylcarbamoyl group on adenosine at position 37 (t(6)A37) in tRNAs that read codons beginning with adenine. Is involved in the transfer of the threonylcarbamoyl moiety of threonylcarbamoyl-AMP (TC-AMP) to the N6 group of A37, together with TsaE and TsaB. TsaD likely plays a direct catalytic role in this reaction. The polypeptide is tRNA N6-adenosine threonylcarbamoyltransferase (Pseudomonas putida (strain ATCC 700007 / DSM 6899 / JCM 31910 / BCRC 17059 / LMG 24140 / F1)).